The following is a 137-amino-acid chain: Small ribosomal subunit protein uS19 (137 aa).

It belongs to the universal ribosomal protein uS19 family.

Its function is as follows. Protein S19 forms a complex with S13 that binds strongly to the 16S ribosomal RNA. The protein is Small ribosomal subunit protein uS19 of Methanoculleus marisnigri (strain ATCC 35101 / DSM 1498 / JR1).